Reading from the N-terminus, the 186-residue chain is Ribosomal RNA small subunit methyltransferase G (186 aa).

S-adenosyl-L-methionine-binding positions include G59, F64, 110–111 (IE), and R124.

This sequence belongs to the methyltransferase superfamily. RNA methyltransferase RsmG family.

It localises to the cytoplasm. It catalyses the reaction guanosine(527) in 16S rRNA + S-adenosyl-L-methionine = N(7)-methylguanosine(527) in 16S rRNA + S-adenosyl-L-homocysteine. In terms of biological role, specifically methylates the N7 position of guanine in position 527 of 16S rRNA. This chain is Ribosomal RNA small subunit methyltransferase G, found in Campylobacter curvus (strain 525.92).